A 123-amino-acid polypeptide reads, in one-letter code: Small ribosomal subunit protein uS12 (123 aa).

Aspartate 89 carries the 3-methylthioaspartic acid modification.

Belongs to the universal ribosomal protein uS12 family. Part of the 30S ribosomal subunit. Contacts proteins S8 and S17. May interact with IF1 in the 30S initiation complex.

With S4 and S5 plays an important role in translational accuracy. In terms of biological role, interacts with and stabilizes bases of the 16S rRNA that are involved in tRNA selection in the A site and with the mRNA backbone. Located at the interface of the 30S and 50S subunits, it traverses the body of the 30S subunit contacting proteins on the other side and probably holding the rRNA structure together. The combined cluster of proteins S8, S12 and S17 appears to hold together the shoulder and platform of the 30S subunit. This is Small ribosomal subunit protein uS12 from Anaeromyxobacter dehalogenans (strain 2CP-1 / ATCC BAA-258).